Here is a 262-residue protein sequence, read N- to C-terminus: Phosphatidylglycerol--prolipoprotein diacylglyceryl transferase (262 aa).

Helical transmembrane passes span 9–29 (LGPLAIRWYALCIVTGLILAV), 41–61 (IIPDDILDFILVAFPLAILGA), 80–100 (IFAIWNGGLAIYGGLITGALV), and 109–129 (LINTWDFLDIAAPSVMIAQSL). Arg131 provides a ligand contact to a 1,2-diacyl-sn-glycero-3-phospho-(1'-sn-glycerol). Transmembrane regions (helical) follow at residues 167–187 (QPTFLYESLWNLLGFALILIF), 197–217 (GHITAFYLIWYGFGRMVIEGM), and 227–247 (LRVSQWLSVVLIGLGIMIVIY).

This sequence belongs to the Lgt family.

Its subcellular location is the cell membrane. It carries out the reaction L-cysteinyl-[prolipoprotein] + a 1,2-diacyl-sn-glycero-3-phospho-(1'-sn-glycerol) = an S-1,2-diacyl-sn-glyceryl-L-cysteinyl-[prolipoprotein] + sn-glycerol 1-phosphate + H(+). The protein operates within protein modification; lipoprotein biosynthesis (diacylglyceryl transfer). In terms of biological role, catalyzes the transfer of the diacylglyceryl group from phosphatidylglycerol to the sulfhydryl group of the N-terminal cysteine of a prolipoprotein, the first step in the formation of mature lipoproteins. The polypeptide is Phosphatidylglycerol--prolipoprotein diacylglyceryl transferase (Streptococcus pneumoniae (strain JJA)).